The chain runs to 414 residues: Serine/threonine transporter SstT (414 aa).

The next 9 helical transmembrane spans lie at 19-39 (IIVGLVLGVVTALISPDLEPV), 55-75 (FVKGLRAVAPILIFVLVIAAI), 89-109 (IVMLYIIGTFGASIVAVLASF), 148-168 (ALATSNFIGILAWAIALGIAL), 189-209 (IVHLVISLAPFGIFGLVAATL), 223-243 (LLLVLLGSMLFMALVVNPFIV), 297-317 (IPLGATINMAGAAITVTVLTL), 323-343 (LGIPVSIPTAILLSVVSAVCA), and 363-383 (LFGISGDVAAQVIAVGFVIGV).

This sequence belongs to the dicarboxylate/amino acid:cation symporter (DAACS) (TC 2.A.23) family.

The protein localises to the cell inner membrane. It carries out the reaction L-serine(in) + Na(+)(in) = L-serine(out) + Na(+)(out). The catalysed reaction is L-threonine(in) + Na(+)(in) = L-threonine(out) + Na(+)(out). Functionally, involved in the import of serine and threonine into the cell, with the concomitant import of sodium (symport system). The chain is Serine/threonine transporter SstT from Actinobacillus succinogenes (strain ATCC 55618 / DSM 22257 / CCUG 43843 / 130Z).